A 900-amino-acid polypeptide reads, in one-letter code: Minor teichoic acid biosynthesis protein GgaB (900 aa).

It belongs to the glycosyltransferase 2 family.

The protein operates within cell wall biogenesis; poly(glucopyranosyl N-acetylgalactosamine 1-phosphate) teichoic acid biosynthesis. Involved in the biosynthesis of galactosamine-containing minor teichoic acid, a non-essential cell wall polymer in B.subtilis 168. The protein is Minor teichoic acid biosynthesis protein GgaB (ggaB) of Bacillus subtilis (strain 168).